A 430-amino-acid polypeptide reads, in one-letter code: Glutamyl-tRNA reductase (430 aa).

Residues 50 to 53, Ser108, 113 to 115, and Gln119 each bind substrate; these read TCNR and EPQ. Cys51 serves as the catalytic Nucleophile. 188–193 serves as a coordination point for NADP(+); it reads GAGEMA.

The protein belongs to the glutamyl-tRNA reductase family. In terms of assembly, homodimer.

The enzyme catalyses (S)-4-amino-5-oxopentanoate + tRNA(Glu) + NADP(+) = L-glutamyl-tRNA(Glu) + NADPH + H(+). The protein operates within porphyrin-containing compound metabolism; protoporphyrin-IX biosynthesis; 5-aminolevulinate from L-glutamyl-tRNA(Glu): step 1/2. In terms of biological role, catalyzes the NADPH-dependent reduction of glutamyl-tRNA(Glu) to glutamate 1-semialdehyde (GSA). The sequence is that of Glutamyl-tRNA reductase from Desulfovibrio desulfuricans (strain ATCC 27774 / DSM 6949 / MB).